The primary structure comprises 110 residues: MNDILTQLGKVLEERKLADPDSSYVASLHAKGLNKILEKVGEECTETILAAKDAEQDGSTHNVIYETADLWFHSLVMLSHLNIAPQEIMQELARRFDISGLEEKASRGKK.

This sequence belongs to the PRA-PH family.

It localises to the cytoplasm. It carries out the reaction 1-(5-phospho-beta-D-ribosyl)-ATP + H2O = 1-(5-phospho-beta-D-ribosyl)-5'-AMP + diphosphate + H(+). It functions in the pathway amino-acid biosynthesis; L-histidine biosynthesis; L-histidine from 5-phospho-alpha-D-ribose 1-diphosphate: step 2/9. This is Phosphoribosyl-ATP pyrophosphatase from Hahella chejuensis (strain KCTC 2396).